The following is a 438-amino-acid chain: 3-phosphoshikimate 1-carboxyvinyltransferase (438 aa).

Residues Lys-23, Ser-24, and Arg-28 each contribute to the 3-phosphoshikimate site. Lys-23 lines the phosphoenolpyruvate pocket. The phosphoenolpyruvate site is built by Gly-94 and Arg-122. Ser-167, Gln-169, Asp-321, and Lys-348 together coordinate 3-phosphoshikimate. Gln-169 contributes to the phosphoenolpyruvate binding site. Asp-321 acts as the Proton acceptor in catalysis. Arg-352 and Arg-393 together coordinate phosphoenolpyruvate.

Belongs to the EPSP synthase family. As to quaternary structure, monomer.

The protein resides in the cytoplasm. The enzyme catalyses 3-phosphoshikimate + phosphoenolpyruvate = 5-O-(1-carboxyvinyl)-3-phosphoshikimate + phosphate. The protein operates within metabolic intermediate biosynthesis; chorismate biosynthesis; chorismate from D-erythrose 4-phosphate and phosphoenolpyruvate: step 6/7. Functionally, catalyzes the transfer of the enolpyruvyl moiety of phosphoenolpyruvate (PEP) to the 5-hydroxyl of shikimate-3-phosphate (S3P) to produce enolpyruvyl shikimate-3-phosphate and inorganic phosphate. The chain is 3-phosphoshikimate 1-carboxyvinyltransferase from Helicobacter hepaticus (strain ATCC 51449 / 3B1).